The chain runs to 363 residues: Osmoprotective compounds uptake ATP-binding protein GgtA (363 aa).

An ABC transporter domain is found at 4-234 (VSFEQVTKQF…PANLFVAGFI (231 aa)). 36–43 (GPSGCGKT) serves as a coordination point for ATP.

It belongs to the ABC transporter superfamily. The complex is composed of two ATP-binding proteins (GgtA), two transmembrane proteins (GgtC and GgtD) and a solute-binding protein (GgtB).

It localises to the cell membrane. Its function is as follows. Part of the ABC transporter complex GgtABCD involved in the uptake of the osmoprotective compounds glucosylglycerol (GG), sucrose and trehalose. Responsible for energy coupling to the transport system. This is Osmoprotective compounds uptake ATP-binding protein GgtA from Synechocystis sp. (strain ATCC 27184 / PCC 6803 / Kazusa).